Reading from the N-terminus, the 912-residue chain is MTKKPYFRLSIISCLLISCYVKAETQSIKDTKEAISSEVDTQSTEDSELETISVTAEKVRDRKDNEVTGLGKIIKTSESISREQVLNIRDLTRYDPGISVVEQGRGASSGYSIRGMDRNRVALLVDGLPQTQSYVVQSPLVARSGYSGTGAINEIEYENVKAVEISKGGSSSEYGNGALAGSVTFQSKSAADILEGDKSWGIQTKNAYSSKNKGFTHSLAVAGKQGGFEGLAIYTQRNSIETQVHKDALKGVQSYNRLIAKPENQSAYFVMEDECPKGYDECIPSAKPPAILSTKKETVSVSDYTGANRIKPNPMKYESQSWFLRGGYHFSEQHYIGGIFEFTQQKFDIRDMTFPAYLSPTEKGDLANRPFYPKQDYGAYQHIEDGRGVKYASGLYFDEHHRKQRVGIEYIYENKNKAGIIDKAVLSANQQNIILDSYMRHTHCSLYPNPSKNCRPTLDKPYSYYRSDRNVYKEKHNMLQLNLEKKIQQNWLTHQIVFNLGFDDFTSALQHKDYLTRRVIATADSISDKTGKTRRNGLREYPYLYPKPKPYFAGEDHCNYQGSSSNYRDCKVRLIKGKNYYFAARNNMALGKYVDLGLGIRYDVSRTKANESTISVGKFKNFSWNTGIVIKPTEWLDLSYRLSTGFRNPSFAEMYGWRYGGKNDEVYVGKFKPETSRNQEFGLALKGDFGNIEISHFSNAYRNLIAFAEELSKNGTGKGNYGYHNAQNAKLVGVNITAQLDFNGLWKRIPYGWYATFAYNRVKVKDQKINAGLASVSSYLFDAIQPSRYIIGLGYDHISNTWGVNATFTQSKAKSQNELLGKRALGNNSRDVKSTRKLTRAWHILDVSGYYMANKNIMLRLGIYNLFNYRYVTWEAVRQTAQGAVNQHQNVGNYTRYAASGRNYTLTLEMKF.

The N-terminal stretch at 1 to 23 (MTKKPYFRLSIISCLLISCYVKA) is a signal peptide. The short motif at 50 to 57 (ETISVTAE) is the TonB box element. The TBDR plug domain occupies 63 to 188 (KDNEVTGLGK…LAGSVTFQSK (126 aa)). Residues 199–912 (SWGIQTKNAY…NYTLTLEMKF (714 aa)) enclose the TBDR beta-barrel domain. The TonB C-terminal box motif lies at 895-912 (TRYAASGRNYTLTLEMKF).

The protein belongs to the TonB-dependent receptor family.

Its subcellular location is the cell outer membrane. Its function is as follows. Haemophilus acquires iron by extracting it from serum transferrin (TF) in its human host. Acts as a transferrin receptor and is required for transferrin utilization. The polypeptide is Transferrin-binding protein A (Haemophilus influenzae (strain ATCC 51907 / DSM 11121 / KW20 / Rd)).